A 60-amino-acid polypeptide reads, in one-letter code: UPF0434 protein KPK_3615 (60 aa).

Belongs to the UPF0434 family.

The chain is UPF0434 protein KPK_3615 from Klebsiella pneumoniae (strain 342).